The following is a 400-amino-acid chain: Argininosuccinate synthase (400 aa).

ATP contacts are provided by residues Ala10–Ser18 and Ala38. Tyr89 lines the L-citrulline pocket. Residue Gly119 coordinates ATP. Thr121, Asn125, and Asp126 together coordinate L-aspartate. L-citrulline is bound at residue Asn125. 5 residues coordinate L-citrulline: Arg129, Ser177, Ser186, Glu262, and Tyr274.

Belongs to the argininosuccinate synthase family. Type 1 subfamily. As to quaternary structure, homotetramer.

The protein resides in the cytoplasm. It catalyses the reaction L-citrulline + L-aspartate + ATP = 2-(N(omega)-L-arginino)succinate + AMP + diphosphate + H(+). It functions in the pathway amino-acid biosynthesis; L-arginine biosynthesis; L-arginine from L-ornithine and carbamoyl phosphate: step 2/3. This is Argininosuccinate synthase from Nostoc punctiforme (strain ATCC 29133 / PCC 73102).